The primary structure comprises 267 residues: Hydroxyethylthiazole kinase (267 aa).

Met-46 contributes to the substrate binding site. ATP contacts are provided by Arg-122 and Thr-168. Position 195 (Gly-195) interacts with substrate.

Belongs to the Thz kinase family. Mg(2+) is required as a cofactor.

It catalyses the reaction 5-(2-hydroxyethyl)-4-methylthiazole + ATP = 4-methyl-5-(2-phosphooxyethyl)-thiazole + ADP + H(+). Its pathway is cofactor biosynthesis; thiamine diphosphate biosynthesis; 4-methyl-5-(2-phosphoethyl)-thiazole from 5-(2-hydroxyethyl)-4-methylthiazole: step 1/1. Catalyzes the phosphorylation of the hydroxyl group of 4-methyl-5-beta-hydroxyethylthiazole (THZ). This is Hydroxyethylthiazole kinase from Moorella thermoacetica (strain ATCC 39073 / JCM 9320).